The sequence spans 294 residues: tRNA pseudouridine synthase B (294 aa).

Catalysis depends on Asp-39, which acts as the Nucleophile.

It belongs to the pseudouridine synthase TruB family. Type 1 subfamily.

It carries out the reaction uridine(55) in tRNA = pseudouridine(55) in tRNA. Responsible for synthesis of pseudouridine from uracil-55 in the psi GC loop of transfer RNAs. This Streptococcus pyogenes serotype M3 (strain ATCC BAA-595 / MGAS315) protein is tRNA pseudouridine synthase B.